The following is a 351-amino-acid chain: CCN family member 3 (351 aa).

Residues M1–V24 form the signal peptide. The region spanning R27 to L101 is the IGFBP N-terminal domain. Intrachain disulfides connect C31–C57, C35–C59, C39–C60, C46–C63, C71–C85, and C77–C98. Positions D104–D170 constitute a VWFC domain. Positions N201–E246 constitute a TSP type-1 domain. 5 disulfides stabilise this stretch: C258–C295, C275–C309, C286–C325, C289–C327, and C294–C331. Residues C258–P332 form the CTCK domain. N274 is a glycosylation site (N-linked (GlcNAc...) asparagine).

The protein belongs to the CCN family. In terms of tissue distribution, brain and heart, and at a lower level in muscle and intestine, in the embryo. Lung and less so in brain and spleen, in adult chicken.

The protein resides in the secreted. It is found in the cytoplasm. The protein localises to the cell junction. Its subcellular location is the gap junction. In terms of biological role, immediate-early protein likely to play a role in cell growth regulation. Its overexpression is associated with tumorigenesis and expression of a N-terminal-truncated version of CCN3 gene in chicken embryonic fibroblasts (CEF) is sufficient to induce the transformation of CEF in vitro. The chain is CCN family member 3 (CCN3) from Gallus gallus (Chicken).